We begin with the raw amino-acid sequence, 295 residues long: Acetylglutamate kinase (295 aa).

Substrate-binding positions include 66 to 67, Arg88, and Asn193; that span reads GG.

The protein belongs to the acetylglutamate kinase family. ArgB subfamily.

The protein resides in the cytoplasm. It catalyses the reaction N-acetyl-L-glutamate + ATP = N-acetyl-L-glutamyl 5-phosphate + ADP. It functions in the pathway amino-acid biosynthesis; L-arginine biosynthesis; N(2)-acetyl-L-ornithine from L-glutamate: step 2/4. In terms of biological role, catalyzes the ATP-dependent phosphorylation of N-acetyl-L-glutamate. The protein is Acetylglutamate kinase of Rhizobium etli (strain ATCC 51251 / DSM 11541 / JCM 21823 / NBRC 15573 / CFN 42).